Consider the following 498-residue polypeptide: Fascin-3 (498 aa).

Belongs to the fascin family. In terms of tissue distribution, expressed in testis.

It is found in the cytoplasm. The protein resides in the cytoskeleton. Its function is as follows. Acts as an actin bundling protein. This is Fascin-3 (FSCN3) from Homo sapiens (Human).